Reading from the N-terminus, the 280-residue chain is MVVKVGIAKLGNIASGVMAELLLDERADREDMQTFMATSGTKLQPEDIDRVVSTMKAWEPDFCIVVSPNGVLPGPVGARDELLKAGIPCVVITDDITTKKEGWEALKASSFGYIIMKADAMIGARREFLDPVEMADFNGNLVKVLALTGAFRKLQTELDKVIDQVKEGKKGADLVLPKVVMTSDKAVDGEFSNPYALAKARAAYEIAQAVAGVNVKGCFMTKEWEKYIPIVASAHEMMRQAAALGDEAREIEKAGNGIIRKPHKKDGTIVSKITLISKPE.

It belongs to the MTD family.

The enzyme catalyses 5,10-methylenetetrahydromethanopterin + oxidized coenzyme F420-(gamma-L-Glu)(n) + 2 H(+) = 5,10-methenyl-5,6,7,8-tetrahydromethanopterin + reduced coenzyme F420-(gamma-L-Glu)(n). It functions in the pathway one-carbon metabolism; methanogenesis from CO(2); 5,10-methylene-5,6,7,8-tetrahydromethanopterin from 5,10-methenyl-5,6,7,8-tetrahydromethanopterin (coenzyme F420 route): step 1/1. Its function is as follows. Catalyzes the reversible reduction of methenyl-H(4)MPT(+) to methylene-H(4)MPT. This chain is F420-dependent methylenetetrahydromethanopterin dehydrogenase, found in Methanosphaerula palustris (strain ATCC BAA-1556 / DSM 19958 / E1-9c).